Here is a 162-residue protein sequence, read N- to C-terminus: Autophagy-related protein 8 (162 aa).

Residues 1 to 27 (MRSKFKDEHPFEKRKAEAERIRQKYSD) are compositionally biased toward basic and acidic residues. The interval 1-42 (MRSKFKDEHPFEKRKAEAERIRQKYSDRIPPSPHSPASRLIG) is disordered. Gly-157 is lipidated: Phosphatidylethanolamine amidated glycine. Positions 158 to 162 (GFETA) are cleaved as a propeptide — removed in mature form.

This sequence belongs to the ATG8 family.

Its subcellular location is the cytoplasmic vesicle. The protein localises to the autophagosome membrane. It localises to the vacuole membrane. Ubiquitin-like modifier involved in autophagosome formation. With ATG4, mediates the delivery of the autophagosomes to the vacuole via the microtubule cytoskeleton. Required for selective autophagic degradation of the nucleus (nucleophagy) as well as for mitophagy which contributes to regulate mitochondrial quantity and quality by eliminating the mitochondria to a basal level to fulfill cellular energy requirements and preventing excess ROS production. Also participates in membrane fusion events that take place in the early secretory pathway. Also involved in endoplasmic reticulum-specific autophagic process and is essential for the survival of cells subjected to severe ER stress. The ATG8-PE conjugate mediates tethering between adjacent membranes and stimulates membrane hemifusion, leading to expansion of the autophagosomal membrane during autophagy. The sequence is that of Autophagy-related protein 8 from Colletotrichum higginsianum (strain IMI 349063) (Crucifer anthracnose fungus).